The following is a 745-amino-acid chain: DEAD-box ATP-dependent RNA helicase 3A, chloroplastic (745 aa).

The transit peptide at methionine 1 to valine 41 directs the protein to the chloroplast. Residues leucine 88 to arginine 116 carry the Q motif motif. A Helicase ATP-binding domain is found at leucine 119–isoleucine 295. ATP is bound at residue alanine 132–threonine 139. The DEAD box signature appears at aspartate 243–aspartate 246. One can recognise a Helicase C-terminal domain in the interval isoleucine 324–leucine 469. Residues leucine 606–serine 724 are disordered. Residues glycine 641–glycine 650 are compositionally biased toward gly residues. Residues glutamate 656–asparagine 670 are compositionally biased toward basic and acidic residues. Residues arginine 687 to serine 724 show a composition bias toward low complexity. The CCHC-type zinc-finger motif lies at glycine 727–asparagine 744.

Belongs to the DEAD box helicase family. DDX21/DDX50 subfamily.

It is found in the plastid. The protein resides in the chloroplast. The enzyme catalyses ATP + H2O = ADP + phosphate + H(+). In terms of biological role, nuclear genome-encoded factor involved in ribosome biogenesis in chloroplasts. Binds specific group II introns in chloroplasts and facilitates their splicing. Required for normal development of chloroplasts. In Zea mays (Maize), this protein is DEAD-box ATP-dependent RNA helicase 3A, chloroplastic.